Consider the following 719-residue polypeptide: Ribosomal RNA large subunit methyltransferase K/L (719 aa).

Residues 43 to 154 enclose the THUMP domain; that stretch reads IGYKACLWSR…KGKANITLDL (112 aa).

This sequence belongs to the methyltransferase superfamily. RlmKL family.

Its subcellular location is the cytoplasm. It catalyses the reaction guanosine(2445) in 23S rRNA + S-adenosyl-L-methionine = N(2)-methylguanosine(2445) in 23S rRNA + S-adenosyl-L-homocysteine + H(+). It carries out the reaction guanosine(2069) in 23S rRNA + S-adenosyl-L-methionine = N(2)-methylguanosine(2069) in 23S rRNA + S-adenosyl-L-homocysteine + H(+). Functionally, specifically methylates the guanine in position 2445 (m2G2445) and the guanine in position 2069 (m7G2069) of 23S rRNA. In Aeromonas salmonicida (strain A449), this protein is Ribosomal RNA large subunit methyltransferase K/L.